Consider the following 436-residue polypeptide: Transcription factor Sox-10 (436 aa).

Disordered regions lie at residues 1–55 (MSDD…ERFP), 145–183 (RLRM…AEGG), 195–257 (HLDH…DFGN), 322–346 (PQTD…QPST), and 413–436 (SPSV…LSRP). Lysine 44 participates in a covalent cross-link: Glycyl lysine isopeptide (Lys-Gly) (interchain with G-Cter in SUMO). Residues 48 to 88 (DSEDERFPVCIREAVSQVLSGYDWTLVPMPVRVNGGSKSKP) form a dimerization (DIM) region. Residues 90 to 158 (VKRPMNAFMV…QHKKDHPDYK (69 aa)) constitute a DNA-binding region (HMG box). The segment covering 145–159 (RLRMQHKKDHPDYKY) has biased composition (basic and acidic residues). 2 stretches are compositionally biased toward polar residues: residues 205 to 215 (SDGNSEHSAGQ) and 331 to 346 (KTES…QPST). The interval 209–295 (SEHSAGQSHG…NGHAGHPSHI (87 aa)) is transactivation domain (TAM). The interval 327-436 (KAQVKTESSS…QPVYTTLSRP (110 aa)) is transactivation domain (TAC). A Glycyl lysine isopeptide (Lys-Gly) (interchain with G-Cter in SUMO) cross-link involves residue lysine 331.

As to quaternary structure, interacts with the sumoylation factors ube2i/ubc9 and sumo1. Sumoylated.

The protein localises to the cytoplasm. The protein resides in the nucleus. Its function is as follows. Acts early in neural crest formation, functioning redundantly with the other group E Sox factors sox8 and sox9 to induce neural crest progenitors. Acts downstream of wnt-signaling at the neural plate border. Involved in the specification of neural crest progenitors fated to form the pigment cell lineage. The chain is Transcription factor Sox-10 from Xenopus tropicalis (Western clawed frog).